The following is a 636-amino-acid chain: Translation factor GUF1 homolog, chloroplastic (636 aa).

The region spanning 31–212 (NLARNFSIIA…AIVTKIPPPQ (182 aa)) is the tr-type G domain. GTP-binding positions include 40 to 47 (AHIDHGKS), 105 to 109 (DTPGH), and 159 to 162 (NKID).

Belongs to the TRAFAC class translation factor GTPase superfamily. Classic translation factor GTPase family. LepA subfamily.

Its subcellular location is the plastid. It localises to the chloroplast. The catalysed reaction is GTP + H2O = GDP + phosphate + H(+). Functionally, promotes chloroplast protein synthesis. May act as a fidelity factor of the translation reaction, by catalyzing a one-codon backward translocation of tRNAs on improperly translocated ribosomes. This Oryza sativa subsp. indica (Rice) protein is Translation factor GUF1 homolog, chloroplastic.